The primary structure comprises 432 residues: CLOCK-interacting pacemaker (432 aa).

2 disordered regions span residues 71–98 (ADSDKDSGFSDGSSECLSSAEQMESEDM) and 194–315 (SYTK…SSPL). Residue S246 is modified to Phosphoserine. A compositionally biased stretch (polar residues) spans 272-283 (SPQTLQPVSSSH). A coiled-coil region spans residues 364–395 (EITLKTKELIRQNQATQAELDQLKEQTQMFIE). The segment at 408 to 432 (LQASLTSGSSHSGSDLDTLSDHPDV) is disordered. A compositionally biased stretch (low complexity) spans 411 to 424 (SLTSGSSHSGSDLD).

As to quaternary structure, interacts with CLOCK. Forms a ternary complex with the CLOCK-BMAL1 heterodimer. Interacts with CAD and HSPA5. Expressed in the heart, kidney and liver and shows a circadian oscillation in these tissues with a peak at circadian time 14 hours (at protein level). Expressed in the brain, including the suprachiasmatic nucleus (SCN) of the brain, and in multiple peripheral tissues such as heart, liver and kidney. Exhibits a circadian oscillation in the peripheral tissues with a peak at circadian time 14 hours.

It is found in the nucleus. It localises to the cytoplasm. The protein localises to the cytosol. Transcriptional repressor which may act as a negative-feedback regulator of CLOCK-BMAL1 transcriptional activity in the circadian-clock mechanism. May stimulate BMAL1-dependent phosphorylation of CLOCK. However, the physiological relevance of these observations is unsure, since experiments in knockout mice showed that CIPC is not critially required for basic circadian clock. This chain is CLOCK-interacting pacemaker (Cipc), found in Mus musculus (Mouse).